A 517-amino-acid polypeptide reads, in one-letter code: Cytochrome P450 11B, mitochondrial (517 aa).

Residues M1–D45 constitute a mitochondrion transit peptide. C465 is a heme binding site.

The protein belongs to the cytochrome P450 family. Heme is required as a cofactor.

It localises to the mitochondrion membrane. The catalysed reaction is a steroid + 2 reduced [adrenodoxin] + O2 + 2 H(+) = an 11beta-hydroxysteroid + 2 oxidized [adrenodoxin] + H2O. Has 11 beta-hydroxylation, 18-hydroxylation activities and aldosterone synthetic activity. Catalyzes the final steps of glucocorticoid and mineralocorticoid biosynthesis. The sequence is that of Cytochrome P450 11B, mitochondrial (CYP11B) from Aquarana catesbeiana (American bullfrog).